The primary structure comprises 412 residues: UPF0761 membrane protein LPC_2650 (412 aa).

The next 6 membrane-spanning stretches (helical) occupy residues 36–56 (ALAF…LAIF), 99–119 (LSIW…FTIE), 137–157 (AFLL…LSLA), 177–197 (ILHY…YVVV), 210–230 (GGLV…YYLI), and 241–261 (AFAT…ITLL).

It belongs to the UPF0761 family.

The protein localises to the cell inner membrane. This is UPF0761 membrane protein LPC_2650 from Legionella pneumophila (strain Corby).